We begin with the raw amino-acid sequence, 544 residues long: Protein RDR1 (544 aa).

The segment at residues 14–40 is a DNA-binding region (zn(2)-C6 fungal-type); it reads CETCRELKRKCDGNQPCGACVRFEYDC. The tract at residues 50-71 is disordered; sequence KRRKTVEQDKEAPLPSPPVHVD.

The protein resides in the nucleus. Its function is as follows. May act as a transcriptional repressor of multidrug resistance genes. This Gibberella zeae (strain ATCC MYA-4620 / CBS 123657 / FGSC 9075 / NRRL 31084 / PH-1) (Wheat head blight fungus) protein is Protein RDR1 (RDR1).